The primary structure comprises 224 residues: Cerebellin-2 (224 aa).

The N-terminal stretch at 1–51 (MQAPGRGPLGLRLMMPGRRGALREPGGCGSCLGVALALLLLLLPACCPVRA) is a signal peptide. Asn-53 and Asn-110 each carry an N-linked (GlcNAc...) asparagine glycan. In terms of domain architecture, C1q spans 88 to 224 (SGSAKVAFSA…TFSGFLVFPL (137 aa)).

In terms of assembly, homohexamer; disulfide-linked homotrimers. The trimers are assembled via the globular C1q domains. The trimers associate via N-terminal cysteine residues to form disulfide-linked hexamers. May form homooligomers or heterooligomers with CBLN1 and CBLN3 prior to secretion. Once secreted, does not interact with other CBLN family members. Interacts with GRID2, and more weakly with GRID1. Interacts with NRXN1 and NRXN2 long and short isoforms produced by alternative promoter usage. Weakly interacts with NRXN3 short isoform and not at all with NRXN3 long isoform.

The protein localises to the secreted. Its function is as follows. Acts as a synaptic organizer in specific subsets of neurons in the brain. Essential for long-term maintenance but not establishment of excitatory synapses. Functions as part of a trans-synaptic complex by binding to postsynaptic GRID1 and presynaptic neurexins. This interaction helps regulate the activity of NMDA and AMPA receptors at hippocampal synapses without affecting synapse formation. NRXN1B-CBLN2-GRID1 complex transduce presynaptic signals into postsynaptic NMDAR response. NRXN3B-CBLN2-GRID1 complex transduce presynaptic signals into postsynaptic AMPAR response. This chain is Cerebellin-2, found in Homo sapiens (Human).